Here is a 160-residue protein sequence, read N- to C-terminus: Lipoprotein signal peptidase (160 aa).

Transmembrane regions (helical) follow at residues 60-80 and 84-104; these read IEWLIAASVLGVILAMTAFFI and LPFLDTRPGLIALGVILAGTV. Residues Asp-118 and Asp-132 contribute to the active site. A helical transmembrane segment spans residues 128–148; it reads FNIADSCLTVGVIGLLLLYIV.

This sequence belongs to the peptidase A8 family.

The protein localises to the cell membrane. It catalyses the reaction Release of signal peptides from bacterial membrane prolipoproteins. Hydrolyzes -Xaa-Yaa-Zaa-|-(S,diacylglyceryl)Cys-, in which Xaa is hydrophobic (preferably Leu), and Yaa (Ala or Ser) and Zaa (Gly or Ala) have small, neutral side chains.. It functions in the pathway protein modification; lipoprotein biosynthesis (signal peptide cleavage). Its function is as follows. This protein specifically catalyzes the removal of signal peptides from prolipoproteins. The polypeptide is Lipoprotein signal peptidase (Dehalococcoides mccartyi (strain CBDB1)).